The sequence spans 37 residues: Cytochrome b6-f complex subunit 5 (37 aa).

A helical membrane pass occupies residues 5 to 25 (LLSGIVLGLIVVTLSGLFYAA).

The protein belongs to the PetG family. In terms of assembly, the 4 large subunits of the cytochrome b6-f complex are cytochrome b6, subunit IV (17 kDa polypeptide, PetD), cytochrome f and the Rieske protein, while the 4 small subunits are PetG, PetL, PetM and PetN. The complex functions as a dimer.

The protein localises to the cellular thylakoid membrane. In terms of biological role, component of the cytochrome b6-f complex, which mediates electron transfer between photosystem II (PSII) and photosystem I (PSI), cyclic electron flow around PSI, and state transitions. PetG is required for either the stability or assembly of the cytochrome b6-f complex. The polypeptide is Cytochrome b6-f complex subunit 5 (Trichormus variabilis (strain ATCC 29413 / PCC 7937) (Anabaena variabilis)).